A 180-amino-acid polypeptide reads, in one-letter code: Cell number regulator 7 (180 aa).

The helical transmembrane segment at Ala80–Ser102 threads the bilayer.

Belongs to the cornifelin family. Expressed in roots, leaves, immature ears and silks. Detected preferentially in silks.

It localises to the membrane. This Zea mays (Maize) protein is Cell number regulator 7 (CNR7).